Here is a 388-residue protein sequence, read N- to C-terminus: Cystathionine gamma-synthase (388 aa).

The interval 1 to 24 (MSEDRTGHQGISGPATRAIHAGYR) is disordered. Position 208 is an N6-(pyridoxal phosphate)lysine (lysine 208).

The protein belongs to the trans-sulfuration enzymes family. Homotetramer. Pyridoxal 5'-phosphate serves as cofactor.

The protein localises to the cytoplasm. It catalyses the reaction O-succinyl-L-homoserine + L-cysteine = L,L-cystathionine + succinate + H(+). Catalyzes the formation of L-cystathionine from O-succinyl-L-homoserine (OSHS) and L-cysteine, via a gamma-replacement reaction. In the absence of thiol, catalyzes gamma-elimination to form 2-oxobutanoate, succinate and ammonia. The chain is Cystathionine gamma-synthase (metB) from Mycobacterium bovis (strain ATCC BAA-935 / AF2122/97).